Reading from the N-terminus, the 657-residue chain is Threonine--tRNA ligase (657 aa).

Residues D7 to T70 form the TGS domain. The interval D253 to P555 is catalytic. Residues C351, H402, and H532 each contribute to the Zn(2+) site.

It belongs to the class-II aminoacyl-tRNA synthetase family. Homodimer. The cofactor is Zn(2+).

It localises to the cytoplasm. The catalysed reaction is tRNA(Thr) + L-threonine + ATP = L-threonyl-tRNA(Thr) + AMP + diphosphate + H(+). Functionally, catalyzes the attachment of threonine to tRNA(Thr) in a two-step reaction: L-threonine is first activated by ATP to form Thr-AMP and then transferred to the acceptor end of tRNA(Thr). Also edits incorrectly charged L-seryl-tRNA(Thr). This Chlorobaculum tepidum (strain ATCC 49652 / DSM 12025 / NBRC 103806 / TLS) (Chlorobium tepidum) protein is Threonine--tRNA ligase.